The primary structure comprises 77 residues: Pi-stichotoxin-Hmg5a (77 aa).

The first 21 residues, 1 to 21 (MDYQRLLFLFAVAMVITTTVA), serve as a signal peptide directing secretion. Positions 22–34 (LPQDTALMDGQLQ) are excised as a propeptide. 3 disulfide bridges follow: cysteine 40-cysteine 73, cysteine 42-cysteine 66, and cysteine 56-cysteine 74.

Belongs to the sea anemone type 3 (BDS) potassium channel toxin family.

The protein resides in the secreted. Its subcellular location is the nematocyst. Functionally, toxin that inhibits rat ASIC3 channels (IC(50)=13.8 uM). Also able to bind T.californica muscle-type nicotinic acetylcholine receptors (nAChR), and human alpha-7/CHRNA7 nicotinic acetylcholine receptors. This chain is Pi-stichotoxin-Hmg5a, found in Heteractis magnifica (Magnificent sea anemone).